An 874-amino-acid chain; its full sequence is Probable inorganic carbon transporter subunit DabA (874 aa).

Positions 398, 400, 580, and 595 each coordinate Zn(2+).

It belongs to the inorganic carbon transporter (TC 9.A.2) DabA family. In terms of assembly, forms a complex with DabB. Zn(2+) serves as cofactor.

Its subcellular location is the cell membrane. Part of an energy-coupled inorganic carbon pump. The sequence is that of Probable inorganic carbon transporter subunit DabA from Bacillus cereus (strain AH820).